Consider the following 424-residue polypeptide: UDP-N-acetylglucosamine 1-carboxyvinyltransferase (424 aa).

Residue 22–23 (KN) coordinates phosphoenolpyruvate. A UDP-N-acetyl-alpha-D-glucosamine-binding site is contributed by arginine 98. Cysteine 122 acts as the Proton donor in catalysis. Residue cysteine 122 is modified to 2-(S-cysteinyl)pyruvic acid O-phosphothioketal. UDP-N-acetyl-alpha-D-glucosamine contacts are provided by residues 127–131 (RPVDQ), aspartate 312, and isoleucine 334.

Belongs to the EPSP synthase family. MurA subfamily.

The protein localises to the cytoplasm. It catalyses the reaction phosphoenolpyruvate + UDP-N-acetyl-alpha-D-glucosamine = UDP-N-acetyl-3-O-(1-carboxyvinyl)-alpha-D-glucosamine + phosphate. Its pathway is cell wall biogenesis; peptidoglycan biosynthesis. In terms of biological role, cell wall formation. Adds enolpyruvyl to UDP-N-acetylglucosamine. The sequence is that of UDP-N-acetylglucosamine 1-carboxyvinyltransferase from Xanthomonas oryzae pv. oryzae (strain MAFF 311018).